The chain runs to 460 residues: Argininosuccinate lyase (460 aa).

This sequence belongs to the lyase 1 family. Argininosuccinate lyase subfamily.

Its subcellular location is the cytoplasm. It catalyses the reaction 2-(N(omega)-L-arginino)succinate = fumarate + L-arginine. The protein operates within amino-acid biosynthesis; L-arginine biosynthesis; L-arginine from L-ornithine and carbamoyl phosphate: step 3/3. In Prosthecochloris aestuarii (strain DSM 271 / SK 413), this protein is Argininosuccinate lyase.